The sequence spans 31 residues: Aspartate racemase (31 aa).

The disordered stretch occupies residues 1-31 (PVAPEYLFKKEEDKGANKEEEEVAPELGIRA). Positions 7-18 (LFKKEEDKGANK) are enriched in basic and acidic residues.

It belongs to the aspartate/glutamate racemases family. Requires pyridoxal 5'-phosphate as cofactor.

It catalyses the reaction L-aspartate = D-aspartate. With respect to regulation, inhibited by hydroxylamine, aminooxyacetate, phenylhydrazine and sodium borohydride. Its function is as follows. Highly specific toward aspartate and entirely inactive on glutamate, alanine and serine. The protein is Aspartate racemase of Anadara broughtonii (Blood clam).